The following is a 427-amino-acid chain: Type II methyltransferase M1.BsuMI (427 aa).

Positions 84 to 427 (INIADLFSGC…SYLLALHQLR (344 aa)) constitute an SAM-dependent MTase C5-type domain. Cysteine 176 is a catalytic residue.

Belongs to the class I-like SAM-binding methyltransferase superfamily. C5-methyltransferase family. In terms of assembly, monomer. May form a complex with YdiP, also seems to be active alone.

The catalysed reaction is a 2'-deoxycytidine in DNA + S-adenosyl-L-methionine = a 5-methyl-2'-deoxycytidine in DNA + S-adenosyl-L-homocysteine + H(+). Its activity is regulated as follows. Somewhat inhibited by MgCl(2) and spermidine, strongly inhibited by MnCl(2). Its function is as follows. A methylase, recognizes the double-stranded sequence 5'-YTCGAR-3', methylates C-3 on both strands, and protects the DNA from cleavage by the BsuMI endonuclease. The chain is Type II methyltransferase M1.BsuMI (ydiO) from Bacillus subtilis (strain 168).